Here is a 445-residue protein sequence, read N- to C-terminus: Tubulin beta-2 chain (445 aa).

An MREI motif motif is present at residues 1-4; the sequence is MREI. Positions 11, 69, 138, 142, 143, 144, 204, and 226 each coordinate GTP. E69 lines the Mg(2+) pocket. Residues 424–445 are disordered; the sequence is QYQDATADEQGEFEEEGEEDEA. The span at 429–445 shows a compositional bias: acidic residues; it reads TADEQGEFEEEGEEDEA. E438 carries the post-translational modification 5-glutamyl polyglutamate.

Belongs to the tubulin family. In terms of assembly, dimer of alpha and beta chains. A typical microtubule is a hollow water-filled tube with an outer diameter of 25 nm and an inner diameter of 15 nM. Alpha-beta heterodimers associate head-to-tail to form protofilaments running lengthwise along the microtubule wall with the beta-tubulin subunit facing the microtubule plus end conferring a structural polarity. Microtubules usually have 13 protofilaments but different protofilament numbers can be found in some organisms and specialized cells. The cofactor is Mg(2+). Some glutamate residues at the C-terminus are polyglycylated, resulting in polyglycine chains on the gamma-carboxyl group. Glycylation is mainly limited to tubulin incorporated into axonemes (cilia and flagella) whereas glutamylation is prevalent in neuronal cells, centrioles, axonemes, and the mitotic spindle. Both modifications can coexist on the same protein on adjacent residues, and lowering polyglycylation levels increases polyglutamylation, and reciprocally. The precise function of polyglycylation is still unclear. Post-translationally, some glutamate residues at the C-terminus are polyglutamylated, resulting in polyglutamate chains on the gamma-carboxyl group. Polyglutamylation plays a key role in microtubule severing by spastin (SPAST). SPAST preferentially recognizes and acts on microtubules decorated with short polyglutamate tails: severing activity by SPAST increases as the number of glutamates per tubulin rises from one to eight, but decreases beyond this glutamylation threshold. In terms of tissue distribution, highly expressed in neuronal cells.

Its subcellular location is the cytoplasm. It localises to the cytoskeleton. In terms of biological role, tubulin is the major constituent of microtubules, a cylinder consisting of laterally associated linear protofilaments composed of alpha- and beta-tubulin heterodimers. Microtubules grow by the addition of GTP-tubulin dimers to the microtubule end, where a stabilizing cap forms. Below the cap, tubulin dimers are in GDP-bound state, owing to GTPase activity of alpha-tubulin. In Gallus gallus (Chicken), this protein is Tubulin beta-2 chain.